The following is a 701-amino-acid chain: MKIKKSVTYGSHQLTFETGEIARQAHAAIMVSMGDTVVLVTVVGAKSAKQGQDFFPLTVDYQERSYAAGRIPGSFFKREGRPSEKEILTSRLIDRPIRPLFPENFYNEVQVVATVLSSDNEVDADIPAMLGASAALVLSGIPFNGPIGAARIGYINGEYVLNPDTSALKQTQLNLVVAGTRQAVLMVESDAMELSEDVMLGAIVYGHQQMQVAIDAINELADEAGVTAWDWEPPARDPALAVKIAELAENDLRAAFRQKQKQVRSETIDNIWTRVFTELGVEDGEGPDAQAVKEACFALESRIVRSQILDGEPRIDGRDTRTVRPITIRTGLLPRTHGSALFTRGETQALVVATLGTGRDEQKIDALQGDYSERFMLHYNMPPYATGETGRVGTPKRREIGHGRLAKRALVAVLPSPEEFGYSLRVVSEITESNGSSSMASVCGGCLALMDAGVPLKGHVAGIAMGLIKEGNRFAVLTDILGDEDHLGDMDFKVAGTENGITALQMDIKIQGITKEILHAALVQAREGRMHILAIMRQVLPARREDISEHAPRIIKIRINPEKIRDVIGKGGAVIRALTEETGTTIDITDDGTVMIACVNAEGGELAKKRIEDITAEVEVGRVYDGTVLKLLDFGAIVSVLPGKDGLLHISQIANERVNNVGDHLKEGQVVRVKVLEADDKGRLRLSMKAVATDVADNAAT.

Residues D485 and D491 each contribute to the Mg(2+) site. The region spanning 552 to 611 (PRIIKIRINPEKIRDVIGKGGAVIRALTEETGTTIDITDDGTVMIACVNAEGGELAKKRI) is the KH domain. Residues 621 to 689 (GRVYDGTVLK…DKGRLRLSMK (69 aa)) enclose the S1 motif domain.

The protein belongs to the polyribonucleotide nucleotidyltransferase family. The cofactor is Mg(2+).

It is found in the cytoplasm. It carries out the reaction RNA(n+1) + phosphate = RNA(n) + a ribonucleoside 5'-diphosphate. In terms of biological role, involved in mRNA degradation. Catalyzes the phosphorolysis of single-stranded polyribonucleotides processively in the 3'- to 5'-direction. This is Polyribonucleotide nucleotidyltransferase from Nitrosospira multiformis (strain ATCC 25196 / NCIMB 11849 / C 71).